The primary structure comprises 619 residues: Chaperone protein HscA homolog (619 aa).

It belongs to the heat shock protein 70 family.

In terms of biological role, chaperone involved in the maturation of iron-sulfur cluster-containing proteins. Has a low intrinsic ATPase activity which is markedly stimulated by HscB. This Laribacter hongkongensis (strain HLHK9) protein is Chaperone protein HscA homolog.